A 1014-amino-acid polypeptide reads, in one-letter code: Nebulette (1014 aa).

Residues 1-24 are disordered; it reads MRVPVFEDIKDETEEEKIGEEENE. A compositionally biased stretch (acidic residues) spans 9-24; the sequence is IKDETEEEKIGEEENE. Nebulin repeat units follow at residues 29–63, 64–99, 100–136, 137–172, 173–205, 206–241, 242–278, 279–313, 314–348, 349–385, 386–422, 423–459, 460–496, 497–533, 534–569, 570–599, 600–635, 636–666, 667–693, 694–728, 729–759, 760–794, and 795–830; these read FYKP…KSKD, KCTF…DLSN, SLYK…AKGF, SDYA…DTHT, YSAE…GIMN, KEPA…EMKD, KKHH…NMHD, PVSD…ENKG, MYHF…KNKG, KPML…EIKG, RSSL…EIKG, KGME…IIKG, KGMQ…EIKG, KGMQ…KMLS, NYST…KKEV, GAGT…HATA, ISDP…KATP, VSMT…GELQ, RGTA…RATT, LSVT…QMKG, RPSL…KTKG, and RGFT…HIVE. D96 carries the omega-N-methylarginine modification. Omega-N-methylarginine is present on R795. The tract at residues 836-953 is linker; sequence GIIVDLKVWR…VSSMRSMQHS (118 aa). The SH3 domain occupies 954–1014; it reads PNLRTYRAMY…LPANYIEFVN (61 aa).

As to quaternary structure, interacts (via nebulin repeats 1-5) with DESM (via rod region). Interacts (via SH3 domain) with XIRP2. Interacts with ZYX/Zyxin. As to expression, abundantly expressed in cardiac muscle, but not in skeletal or smooth muscle. Localized to Z-lines in cardiac cells and to dense bodies in nonmuscle cells. Isoform 2 is expressed in non-muscle cells such as in fibroblasts.

The protein localises to the cytoplasm. Functionally, binds to actin and plays an important role in the assembly of the Z-disk. May functionally link sarcomeric actin to the desmin intermediate filaments in the heart muscle sarcomeres. In terms of biological role, may play a role in the assembly of focal adhesions. This is Nebulette from Homo sapiens (Human).